The following is a 164-amino-acid chain: Hydroxylaminobenzene mutase HabB (164 aa).

A run of 4 helical transmembrane segments spans residues 16–36 (LLQL…LLPM), 50–70 (GVLN…LSLG), 78–98 (FGFA…AGFW), and 121–141 (LIAF…ALAL).

The protein resides in the cell membrane. It catalyses the reaction N-phenylhydroxylamine = 2-aminophenol. Its activity is regulated as follows. Addition of ZnSO(4) decreases the activity to 70%. Functionally, catalyzes the rearrangement of hydroxylaminobenzene to 2-aminophenol. In Ectopseudomonas oleovorans (Pseudomonas oleovorans), this protein is Hydroxylaminobenzene mutase HabB (habB).